The sequence spans 179 residues: Inner membrane-spanning protein YciB (179 aa).

5 helical membrane-spanning segments follow: residues 22–42 (IYAA…YSWV), 50–70 (MALI…FFHN), 76–96 (WKVT…QWVM), 121–141 (LAWA…AFWL), and 149–169 (FKVF…GVYI).

The protein belongs to the YciB family.

Its subcellular location is the cell inner membrane. Functionally, plays a role in cell envelope biogenesis, maintenance of cell envelope integrity and membrane homeostasis. This chain is Inner membrane-spanning protein YciB, found in Escherichia fergusonii (strain ATCC 35469 / DSM 13698 / CCUG 18766 / IAM 14443 / JCM 21226 / LMG 7866 / NBRC 102419 / NCTC 12128 / CDC 0568-73).